We begin with the raw amino-acid sequence, 396 residues long: Elongation factor Tu 1 (396 aa).

Residues 10-206 form the tr-type G domain; that stretch reads KPHCNIGTIG…AVDAYIPQPE (197 aa). The G1 stretch occupies residues 19 to 26; it reads GHVDHGKT. 19-26 contributes to the GTP binding site; it reads GHVDHGKT. Thr26 contacts Mg(2+). The tract at residues 60 to 64 is G2; the sequence is GITIS. The G3 stretch occupies residues 81 to 84; the sequence is DCPG. Residues 81 to 85 and 136 to 139 each bind GTP; these read DCPGH and NKCD. The segment at 136-139 is G4; the sequence is NKCD. Residues 174–176 form a G5 region; sequence SAL.

The protein belongs to the TRAFAC class translation factor GTPase superfamily. Classic translation factor GTPase family. EF-Tu/EF-1A subfamily. As to quaternary structure, monomer.

The protein resides in the cytoplasm. The enzyme catalyses GTP + H2O = GDP + phosphate + H(+). GTP hydrolase that promotes the GTP-dependent binding of aminoacyl-tRNA to the A-site of ribosomes during protein biosynthesis. The sequence is that of Elongation factor Tu 1 from Rhodopseudomonas palustris (strain BisB5).